The following is a 418-amino-acid chain: Argininosuccinate synthase (418 aa).

ATP is bound by residues 14–22 (AYSGGLDTS) and Ala-42. The L-citrulline site is built by Tyr-94 and Ser-99. Residue Gly-124 coordinates ATP. L-aspartate contacts are provided by Thr-126, Asn-130, and Asp-131. L-citrulline is bound at residue Asn-130. L-citrulline-binding residues include Arg-134, Ser-183, Ser-192, Glu-273, and Tyr-285.

This sequence belongs to the argininosuccinate synthase family. Type 1 subfamily. As to quaternary structure, homotetramer.

The protein resides in the cytoplasm. It catalyses the reaction L-citrulline + L-aspartate + ATP = 2-(N(omega)-L-arginino)succinate + AMP + diphosphate + H(+). It participates in amino-acid biosynthesis; L-arginine biosynthesis; L-arginine from L-ornithine and carbamoyl phosphate: step 2/3. This is Argininosuccinate synthase from Colwellia psychrerythraea (strain 34H / ATCC BAA-681) (Vibrio psychroerythus).